The primary structure comprises 471 residues: Probable pyruvate, phosphate dikinase regulatory protein, chloroplastic (471 aa).

Residues 1–49 (MSSSSSTSPRFGSMISAKLASPPPSLLLPPSPRLQGRRLTPPSCTPGTP) constitute a chloroplast transit peptide. Residues 1–133 (MSSSSSTSPR…PHPSSDEAAS (133 aa)) are disordered. The segment covering 21-32 (SPPPSLLLPPSP) has biased composition (pro residues). The segment covering 71–88 (GSATTPRSPAQLGSSQLH) has biased composition (polar residues). Basic residues predominate over residues 89 to 99 (RWSRARAHRSG). Basic and acidic residues predominate over residues 100–111 (RRLEWPTIRDRG). 171-178 (HSVNAALG) is a binding site for ADP.

The protein belongs to the pyruvate, phosphate/water dikinase regulatory protein family. PDRP subfamily.

Its subcellular location is the plastid. The protein localises to the chloroplast. It catalyses the reaction N(tele)-phospho-L-histidyl/L-threonyl-[pyruvate, phosphate dikinase] + ADP = N(tele)-phospho-L-histidyl/O-phospho-L-threonyl-[pyruvate, phosphate dikinase] + AMP + H(+). The enzyme catalyses N(tele)-phospho-L-histidyl/O-phospho-L-threonyl-[pyruvate, phosphate dikinase] + phosphate + H(+) = N(tele)-phospho-L-histidyl/L-threonyl-[pyruvate, phosphate dikinase] + diphosphate. Its activity is regulated as follows. Regulated by light/dark exposure. Bifunctional serine/threonine kinase and phosphorylase involved in the dark/light-mediated regulation of PPDK by catalyzing its phosphorylation/dephosphorylation. Dark/light-induced changes in stromal concentrations of the competing ADP and Pi substrates govern the direction of the reaction. In the dark, phosphorylates the catalytic intermediate of PPDK (PPDK-HisP), inactivating it. Light exposure induces the phosphorolysis reaction that reactivates PPDK. In Oryza sativa subsp. indica (Rice), this protein is Probable pyruvate, phosphate dikinase regulatory protein, chloroplastic (PDRP1).